Reading from the N-terminus, the 414-residue chain is CinA-like protein (414 aa).

It belongs to the CinA family.

This Acidobacterium capsulatum (strain ATCC 51196 / DSM 11244 / BCRC 80197 / JCM 7670 / NBRC 15755 / NCIMB 13165 / 161) protein is CinA-like protein.